Reading from the N-terminus, the 512-residue chain is ATP synthase subunit alpha (512 aa).

Residue 169–176 participates in ATP binding; sequence GDRQTGKT.

Belongs to the ATPase alpha/beta chains family. As to quaternary structure, F-type ATPases have 2 components, CF(1) - the catalytic core - and CF(0) - the membrane proton channel. CF(1) has five subunits: alpha(3), beta(3), gamma(1), delta(1), epsilon(1). CF(0) has three main subunits: a(1), b(2) and c(9-12). The alpha and beta chains form an alternating ring which encloses part of the gamma chain. CF(1) is attached to CF(0) by a central stalk formed by the gamma and epsilon chains, while a peripheral stalk is formed by the delta and b chains.

Its subcellular location is the cell inner membrane. It catalyses the reaction ATP + H2O + 4 H(+)(in) = ADP + phosphate + 5 H(+)(out). In terms of biological role, produces ATP from ADP in the presence of a proton gradient across the membrane. The alpha chain is a regulatory subunit. This Rickettsia canadensis (strain McKiel) protein is ATP synthase subunit alpha.